The chain runs to 379 residues: Chaperone protein DnaJ (379 aa).

One can recognise a J domain in the interval 5-70 (DYYEILGVSK…QKRAAYDQYG (66 aa)). The CR-type zinc finger occupies 134 to 212 (GVTKEIRIPT…CHGHGRVEKS (79 aa)). Zn(2+)-binding residues include C147, C150, C164, C167, C186, C189, C200, and C203. CXXCXGXG motif repeat units lie at residues 147-154 (CDVCHGSG), 164-171 (CPTCHGSG), 186-193 (CPHCQGRG), and 200-207 (CHKCHGHG).

It belongs to the DnaJ family. Homodimer. The cofactor is Zn(2+).

It is found in the cytoplasm. In terms of biological role, participates actively in the response to hyperosmotic and heat shock by preventing the aggregation of stress-denatured proteins and by disaggregating proteins, also in an autonomous, DnaK-independent fashion. Unfolded proteins bind initially to DnaJ; upon interaction with the DnaJ-bound protein, DnaK hydrolyzes its bound ATP, resulting in the formation of a stable complex. GrpE releases ADP from DnaK; ATP binding to DnaK triggers the release of the substrate protein, thus completing the reaction cycle. Several rounds of ATP-dependent interactions between DnaJ, DnaK and GrpE are required for fully efficient folding. Also involved, together with DnaK and GrpE, in the DNA replication of plasmids through activation of initiation proteins. The protein is Chaperone protein DnaJ of Salmonella agona (strain SL483).